The chain runs to 323 residues: Glutathione synthetase (323 aa).

In terms of domain architecture, ATP-grasp spans 133 to 317; sequence KMYALQFQSV…IGDQTIAALE (185 aa). 159-215 provides a ligand contact to ATP; that stretch reads LDELRAAVLKPLGGKAGEGILFLDPGDRNFNSLVEISTQQGQLPVMVQQYLPEAKDG. Glutamate 288 and asparagine 290 together coordinate Mg(2+).

It belongs to the prokaryotic GSH synthase family. Mg(2+) is required as a cofactor. It depends on Mn(2+) as a cofactor.

It catalyses the reaction gamma-L-glutamyl-L-cysteine + glycine + ATP = glutathione + ADP + phosphate + H(+). The protein operates within sulfur metabolism; glutathione biosynthesis; glutathione from L-cysteine and L-glutamate: step 2/2. The chain is Glutathione synthetase from Synechococcus elongatus (strain ATCC 33912 / PCC 7942 / FACHB-805) (Anacystis nidulans R2).